A 408-amino-acid polypeptide reads, in one-letter code: Ribonuclease T2-like (408 aa).

Residues 1-25 (MLQSIPGPQHILKALTGSLGLSTIF) form the signal peptide. Cystine bridges form between cysteine 38-cysteine 56, cysteine 45-cysteine 92, cysteine 55-cysteine 158, and cysteine 100-cysteine 150. Histidine 85 is an active-site residue. Asparagine 108 carries an N-linked (GlcNAc...) asparagine glycan. Catalysis depends on residues glutamate 143 and histidine 147. An N-linked (GlcNAc...) asparagine glycan is attached at asparagine 173. Cysteine 222 and cysteine 257 are disulfide-bonded. The interval 268-292 (KHREPSRTTDTPSQPTTTGTPFKGR) is disordered. Residues 275 to 288 (TTDTPSQPTTTGTP) show a composition bias toward low complexity. A glycan (N-linked (GlcNAc...) asparagine) is linked at asparagine 372.

It belongs to the RNase T2 family.

It localises to the vacuole lumen. The protein localises to the cytoplasm. It carries out the reaction a ribonucleotidyl-ribonucleotide-RNA + H2O = a 3'-end 3'-phospho-ribonucleotide-RNA + a 5'-end dephospho-ribonucleoside-RNA + H(+). In terms of biological role, rnase which modulates cell survival under stress conditions. Released from the vacuole to the cytoplasm during stress to promote tRNA and rRNA cleavage and to activate separately a downstream pathway that promotes cell death. Involved in cell size, vacuolar morphology and growth at high temperatures and high salt concentration. The sequence is that of Ribonuclease T2-like (rny1) from Aspergillus fumigatus (strain ATCC MYA-4609 / CBS 101355 / FGSC A1100 / Af293) (Neosartorya fumigata).